The chain runs to 299 residues: 4-hydroxy-tetrahydrodipicolinate synthase (299 aa).

Thr-44 contributes to the pyruvate binding site. Tyr-133 acts as the Proton donor/acceptor in catalysis. The active-site Schiff-base intermediate with substrate is Lys-162. Ile-204 contacts pyruvate.

Belongs to the DapA family. Homotetramer; dimer of dimers.

The protein resides in the cytoplasm. It carries out the reaction L-aspartate 4-semialdehyde + pyruvate = (2S,4S)-4-hydroxy-2,3,4,5-tetrahydrodipicolinate + H2O + H(+). Its pathway is amino-acid biosynthesis; L-lysine biosynthesis via DAP pathway; (S)-tetrahydrodipicolinate from L-aspartate: step 3/4. Catalyzes the condensation of (S)-aspartate-beta-semialdehyde [(S)-ASA] and pyruvate to 4-hydroxy-tetrahydrodipicolinate (HTPA). The protein is 4-hydroxy-tetrahydrodipicolinate synthase of Thermus thermophilus (strain ATCC 27634 / DSM 579 / HB8).